The chain runs to 514 residues: 2,3-bisphosphoglycerate-independent phosphoglycerate mutase (514 aa).

Residues aspartate 15 and serine 65 each coordinate Mn(2+). Serine 65 functions as the Phosphoserine intermediate in the catalytic mechanism. Substrate contacts are provided by residues histidine 126, 156-157, arginine 188, arginine 194, 261-264, and lysine 335; these read RD and RADR. Aspartate 403, histidine 407, aspartate 444, histidine 445, and histidine 462 together coordinate Mn(2+).

It belongs to the BPG-independent phosphoglycerate mutase family. Monomer. Requires Mn(2+) as cofactor.

The enzyme catalyses (2R)-2-phosphoglycerate = (2R)-3-phosphoglycerate. The protein operates within carbohydrate degradation; glycolysis; pyruvate from D-glyceraldehyde 3-phosphate: step 3/5. Catalyzes the interconversion of 2-phosphoglycerate and 3-phosphoglycerate. This chain is 2,3-bisphosphoglycerate-independent phosphoglycerate mutase, found in Syntrophotalea carbinolica (strain DSM 2380 / NBRC 103641 / GraBd1) (Pelobacter carbinolicus).